We begin with the raw amino-acid sequence, 267 residues long: Ribosomal RNA large subunit methyltransferase E (267 aa).

Residues glycine 50, tryptophan 52, aspartate 68, aspartate 84, and aspartate 109 each coordinate S-adenosyl-L-methionine. The active-site Proton acceptor is lysine 149. A TRAM domain is found at 196 to 255 (PLKIDDKFDVTIKKIGAKGNGIAFVEDFVVFMQDEVKKGENVRIKIVDVKPEFAFAIVIG).

The protein belongs to the class I-like SAM-binding methyltransferase superfamily. RNA methyltransferase RlmE family.

The protein resides in the cytoplasm. The catalysed reaction is uridine(2552) in 23S rRNA + S-adenosyl-L-methionine = 2'-O-methyluridine(2552) in 23S rRNA + S-adenosyl-L-homocysteine + H(+). Its function is as follows. Specifically methylates the uridine in position 2552 of 23S rRNA at the 2'-O position of the ribose in the fully assembled 50S ribosomal subunit. The chain is Ribosomal RNA large subunit methyltransferase E from Methanococcoides burtonii (strain DSM 6242 / NBRC 107633 / OCM 468 / ACE-M).